The sequence spans 392 residues: Formate-dependent phosphoribosylglycinamide formyltransferase (392 aa).

N(1)-(5-phospho-beta-D-ribosyl)glycinamide contacts are provided by residues 22–23 and Glu-82; that span reads EL. ATP contacts are provided by residues Arg-114, Lys-155, 160–165, 195–198, and Glu-203; these read SSGKGQ and EGVV. Residues 119–308 form the ATP-grasp domain; the sequence is RLAAEELGLP…EFALHVRAFL (190 aa). Mg(2+) contacts are provided by Glu-267 and Glu-279. N(1)-(5-phospho-beta-D-ribosyl)glycinamide contacts are provided by residues Asp-286, Lys-355, and 362–363; that span reads RR.

Belongs to the PurK/PurT family. As to quaternary structure, homodimer.

The catalysed reaction is N(1)-(5-phospho-beta-D-ribosyl)glycinamide + formate + ATP = N(2)-formyl-N(1)-(5-phospho-beta-D-ribosyl)glycinamide + ADP + phosphate + H(+). It functions in the pathway purine metabolism; IMP biosynthesis via de novo pathway; N(2)-formyl-N(1)-(5-phospho-D-ribosyl)glycinamide from N(1)-(5-phospho-D-ribosyl)glycinamide (formate route): step 1/1. Involved in the de novo purine biosynthesis. Catalyzes the transfer of formate to 5-phospho-ribosyl-glycinamide (GAR), producing 5-phospho-ribosyl-N-formylglycinamide (FGAR). Formate is provided by PurU via hydrolysis of 10-formyl-tetrahydrofolate. This is Formate-dependent phosphoribosylglycinamide formyltransferase from Salmonella dublin (strain CT_02021853).